Here is a 371-residue protein sequence, read N- to C-terminus: Leu/Ile/Val-binding protein homolog 2 (371 aa).

A signal peptide spans 1 to 23; sequence MKKSLFCGVCLCALVAMGGTSFA.

It belongs to the leucine-binding protein family.

In terms of biological role, component of an amino-acid transport system. The polypeptide is Leu/Ile/Val-binding protein homolog 2 (Brucella abortus (strain 2308)).